The following is a 465-amino-acid chain: Asparagine--tRNA ligase (465 aa).

The protein belongs to the class-II aminoacyl-tRNA synthetase family. Homodimer.

The protein localises to the cytoplasm. The catalysed reaction is tRNA(Asn) + L-asparagine + ATP = L-asparaginyl-tRNA(Asn) + AMP + diphosphate + H(+). This is Asparagine--tRNA ligase from Hahella chejuensis (strain KCTC 2396).